Here is a 264-residue protein sequence, read N- to C-terminus: Small ribosomal subunit protein uS3 (264 aa).

Residues 39–107 enclose the KH type-2 domain; sequence VREYLKKKLK…PVHVNIEEIR (69 aa). Residues 217–264 are disordered; it reads EEVAEEKRPRRNARPGDRRPRRDGEGAPAGARRGAPRRGGAGDGKTGE. Basic and acidic residues predominate over residues 230–241; the sequence is RPGDRRPRRDGE. Over residues 253 to 264 the composition is skewed to gly residues; sequence RRGGAGDGKTGE.

Belongs to the universal ribosomal protein uS3 family. As to quaternary structure, part of the 30S ribosomal subunit. Forms a tight complex with proteins S10 and S14.

Binds the lower part of the 30S subunit head. Binds mRNA in the 70S ribosome, positioning it for translation. The sequence is that of Small ribosomal subunit protein uS3 from Paraburkholderia phymatum (strain DSM 17167 / CIP 108236 / LMG 21445 / STM815) (Burkholderia phymatum).